The following is a 364-amino-acid chain: D-alanine--D-alanine ligase (364 aa).

The region spanning 145 to 354 is the ATP-grasp domain; the sequence is KMAFEQAGLP…FPELVDKLVQ (210 aa). 181–236 serves as a coordination point for ATP; sequence EASLGYPCFVKPANLGSSVGISKVRSRQELEDALDNAANYDRRIIIEAGVAAREVE. Mg(2+) is bound by residues D307, E321, and N323.

Belongs to the D-alanine--D-alanine ligase family. Requires Mg(2+) as cofactor. It depends on Mn(2+) as a cofactor.

It localises to the cytoplasm. The enzyme catalyses 2 D-alanine + ATP = D-alanyl-D-alanine + ADP + phosphate + H(+). It participates in cell wall biogenesis; peptidoglycan biosynthesis. In terms of biological role, cell wall formation. In Nostoc sp. (strain PCC 7120 / SAG 25.82 / UTEX 2576), this protein is D-alanine--D-alanine ligase.